Reading from the N-terminus, the 40-residue chain is Photosystem II reaction center protein J (40 aa).

A helical transmembrane segment spans residues 8–28; it reads IPLWLIGTVTGIPVIGSMGIF.

The protein belongs to the PsbJ family. PSII is composed of 1 copy each of membrane proteins PsbA, PsbB, PsbC, PsbD, PsbE, PsbF, PsbH, PsbI, PsbJ, PsbK, PsbL, PsbM, PsbT, PsbX, PsbY, PsbZ, Psb30/Ycf12, at least 3 peripheral proteins of the oxygen-evolving complex and a large number of cofactors. It forms dimeric complexes.

It is found in the plastid. The protein localises to the chloroplast thylakoid membrane. One of the components of the core complex of photosystem II (PSII). PSII is a light-driven water:plastoquinone oxidoreductase that uses light energy to abstract electrons from H(2)O, generating O(2) and a proton gradient subsequently used for ATP formation. It consists of a core antenna complex that captures photons, and an electron transfer chain that converts photonic excitation into a charge separation. This is Photosystem II reaction center protein J from Illicium oligandrum (Star anise).